The chain runs to 199 residues: Inner membrane-spanning protein YciB (199 aa).

Transmembrane regions (helical) follow at residues 3-23, 47-67, 76-96, 119-139, and 149-169; these read LLIDFFPIILFFVAFKVWGIY, VEPMQWVSLGVIVLFGGATLL, WKPSVLYWLMGSALLIGQLVF, LNWSWAAFFAVMGALNLVIAY, and FKLFGGMGLMLVFVIGQAIYM. Positions 180–199 are disordered; the sequence is AAAATPDALPPPGVQQDKQP.

This sequence belongs to the YciB family.

It localises to the cell inner membrane. Functionally, plays a role in cell envelope biogenesis, maintenance of cell envelope integrity and membrane homeostasis. This Delftia acidovorans (strain DSM 14801 / SPH-1) protein is Inner membrane-spanning protein YciB.